The following is a 255-amino-acid chain: Electron transfer flavoprotein subunit beta (255 aa).

A2 is subject to N-acetylalanine. Residues A9, 39–42 (NPFC), C66, and 123–134 (GKQAIDDDCNQT) each bind AMP. Positions 183–205 (ADLRLNEPRYATLPNIMKAKKKK) are recognition loop. The residue at position 200 (K200) is an N6,N6,N6-trimethyllysine; by ETFBKMT; alternate. N6-acetyllysine; alternate is present on K200. K200 bears the N6-methyllysine; alternate mark. Position 203 is an N6,N6,N6-trimethyllysine; by ETFBKMT (K203). At K210 the chain carries N6-acetyllysine; alternate. K210 is modified (N6-succinyllysine; alternate). Phosphoserine is present on residues S223 and S226. N6-acetyllysine is present on K238. The residue at position 248 (K248) is an N6-acetyllysine; alternate. N6-succinyllysine; alternate is present on K248.

It belongs to the ETF beta-subunit/FixA family. Heterodimer composed of ETFA and ETFB. Identified in a complex that contains ETFA, ETFB and ETFRF1. Interacts with ACADM. Methylated. Trimethylation at Lys-200 and Lys-203 may negatively regulate the activity in electron transfer from acyl-CoA dehydrogenases.

It is found in the mitochondrion matrix. Its function is as follows. Heterodimeric electron transfer flavoprotein that accepts electrons from several mitochondrial dehydrogenases, including acyl-CoA dehydrogenases, glutaryl-CoA and sarcosine dehydrogenase. It transfers the electrons to the main mitochondrial respiratory chain via ETF-ubiquinone oxidoreductase. Required for normal mitochondrial fatty acid oxidation and normal amino acid metabolism. ETFB binds an AMP molecule that probably has a purely structural role. This is Electron transfer flavoprotein subunit beta from Sus scrofa (Pig).